The chain runs to 166 residues: Large ribosomal subunit protein uL10 (166 aa).

The protein belongs to the universal ribosomal protein uL10 family. Part of the ribosomal stalk of the 50S ribosomal subunit. The N-terminus interacts with L11 and the large rRNA to form the base of the stalk. The C-terminus forms an elongated spine to which L12 dimers bind in a sequential fashion forming a multimeric L10(L12)X complex.

Functionally, forms part of the ribosomal stalk, playing a central role in the interaction of the ribosome with GTP-bound translation factors. The polypeptide is Large ribosomal subunit protein uL10 (Pseudomonas fluorescens (strain ATCC BAA-477 / NRRL B-23932 / Pf-5)).